Consider the following 773-residue polypeptide: Acyl-homoserine lactone acylase PvdQ (773 aa).

The first 23 residues, 1-23, serve as a signal peptide directing secretion; sequence MSRALPGFLFAGLSVAVVLPAQA. The propeptide at 200–221 is spacer peptide; that stretch reads SQQVQALQLAAARNERFALERG. S222 functions as the Nucleophile in the catalytic mechanism.

The protein belongs to the peptidase S45 family. As to quaternary structure, heterodimer of an alpha subunit and a beta subunit processed from the same precursor.

It is found in the periplasm. The catalysed reaction is an N-acyl-L-homoserine lactone + H2O = L-homoserine lactone + a carboxylate. Functionally, catalyzes the deacylation of acyl-homoserine lactone (AHL or acyl-HSL), releasing homoserine lactone (HSL) and the corresponding fatty acid. Possesses a specificity for the degradation of long-chain acyl-HSLs (side chains of 11 to 14 carbons in length). The protein is Acyl-homoserine lactone acylase PvdQ (pvdQ) of Pseudomonas syringae pv. tomato (strain ATCC BAA-871 / DC3000).